Consider the following 604-residue polypeptide: MAGINQKNIRNFCIIAHIDHGKSTLADRIIEKTGLLTSREMQEQILDNMDLERERGITIKAQTVRTVYKASDGQEYIFNLIDTPGHVDFNYEVSRALAACDGAILVVDAAQGIEAQTLANVYLALDHDLDVFPVINKIDLPSAEPERVIEEIEDIIGIEAQDAPLISAKNGINIEEVLEQIVTKIPAPSGDASAPLSALIFDSLYDAYKGVIIFVRIKEGTVKKGTKIRMMATGAVEEVVEVGYFGAGRFIPCDELTAGMVGYITASIKNVRDTRVGDTVTDNDRPCEQPLPGYKKVNPMVYCGLYPADGAKYQDLRDALEKLQLNDAALQFEPETSIALGFGFRCGFLGLLHLEIIQERLEREYNLDLVTTAPGVIYKVHKTNGDVIDLTNPSNMPDPSEIDYMEEPMVSAEIMVTTEFVGPIMKLCQERRGIYNGMEYIEQTRALLKYDLPLNEIIYDFFDALKSRSRGYASFDYEMKGYERSKLVKLDILINKEEVDALSFIVFAGNAEERGRKMCEKLKEEIPRQQFEIPIQAAIGSKVIARETVKALRKDVLAKCYGGDISRKKKLLEKQKEGKKRMRQIGNVEIPQKAFMSVLKLDDE.

The tr-type G domain occupies 7-189 (KNIRNFCIIA…QIVTKIPAPS (183 aa)). GTP contacts are provided by residues 19–24 (DHGKST) and 136–139 (NKID).

The protein belongs to the TRAFAC class translation factor GTPase superfamily. Classic translation factor GTPase family. LepA subfamily.

The protein resides in the cell membrane. The enzyme catalyses GTP + H2O = GDP + phosphate + H(+). Its function is as follows. Required for accurate and efficient protein synthesis under certain stress conditions. May act as a fidelity factor of the translation reaction, by catalyzing a one-codon backward translocation of tRNAs on improperly translocated ribosomes. Back-translocation proceeds from a post-translocation (POST) complex to a pre-translocation (PRE) complex, thus giving elongation factor G a second chance to translocate the tRNAs correctly. Binds to ribosomes in a GTP-dependent manner. This chain is Elongation factor 4, found in Lachnospira eligens (strain ATCC 27750 / DSM 3376 / VPI C15-48 / C15-B4) (Eubacterium eligens).